A 326-amino-acid chain; its full sequence is MAQRVQLTATVSENQLGQRLDQALAEMFPDYSRSRIKEWILDQRVLVNGKLCDKPKEKVLGGEQVAINAEIEEEARFEPQDIPLDIVYEDEDIIVINKPRDLVVHPGAGNPDGTVLNALLHYYPPIADVPRAGIVHRLDKDTTGLMVVAKTVPAQTRLVESLQRREITREYEAVAIGHMTAGGTVDEPISRHPTKRTHMAVHPMGKPAVTHYRIMEHFRVHTRLRLRLETGRTHQIRVHMAHITHPLVGDPVYGGRPRPPKGASEAFISTLRKFDRQALHATMLRLYHPISGIEMEWHAPIPQDMVELIEVMRADFEEHKDEVDWL.

Positions 18 to 91 constitute an S4 RNA-binding domain; it reads QRLDQALAEM…IPLDIVYEDE (74 aa). D139 is an active-site residue.

Belongs to the pseudouridine synthase RluA family.

It localises to the cytoplasm. The catalysed reaction is uridine(1911/1915/1917) in 23S rRNA = pseudouridine(1911/1915/1917) in 23S rRNA. Its function is as follows. Responsible for synthesis of pseudouridine from uracil at positions 1911, 1915 and 1917 in 23S ribosomal RNA. In Escherichia coli O157:H7, this protein is Ribosomal large subunit pseudouridine synthase D (rluD).